Reading from the N-terminus, the 121-residue chain is Cell division protein FtsB (121 aa).

Residues 1–6 (MRNWRW) lie on the Cytoplasmic side of the membrane. The helical transmembrane segment at 7-24 (LLLVLAVLLAWLQYRFWF) threads the bilayer. Residues 25 to 121 (GPGNSGEVMM…PASTDPVDHP (97 aa)) lie on the Periplasmic side of the membrane. Residues 31–66 (EVMMLEAQVAHQTQDNEGLRQRNQALAAEVKDLKDG) are a coiled coil. A disordered region spans residues 94 to 121 (APLPAPASPETAAPAQQAPASTDPVDHP). Positions 101–121 (SPETAAPAQQAPASTDPVDHP) are enriched in low complexity.

The protein belongs to the FtsB family. Part of a complex composed of FtsB, FtsL and FtsQ.

Its subcellular location is the cell inner membrane. In terms of biological role, essential cell division protein. May link together the upstream cell division proteins, which are predominantly cytoplasmic, with the downstream cell division proteins, which are predominantly periplasmic. The polypeptide is Cell division protein FtsB (Xanthomonas oryzae pv. oryzae (strain MAFF 311018)).